The primary structure comprises 252 residues: Tricin synthase 1 (252 aa).

S-adenosyl-L-methionine-binding positions include Ser-65, Glu-87, 89–90 (GV), Ser-95, and Asp-113. Position 168 (Asp-168) interacts with a divalent metal cation. Asp-170 is a binding site for S-adenosyl-L-methionine. Asp-194 and Asn-195 together coordinate a divalent metal cation.

This sequence belongs to the class I-like SAM-binding methyltransferase superfamily. Cation-dependent O-methyltransferase family. CCoAMT subfamily. It depends on Mg(2+) as a cofactor. Mn(2+) is required as a cofactor. Requires Co(2+) as cofactor. In terms of tissue distribution, ubiquitous. Highest expression in stems and roots.

It localises to the nucleus. It carries out the reaction tricetin + 2 S-adenosyl-L-methionine = 3',5'-di-O-methyltricetin + 2 S-adenosyl-L-homocysteine + 2 H(+). Catalyzes the stepwise methylation of tricetin to its 3'-mono- and 3',5'-dimethyl ethers. No 3',4',5'-trimethylated ester derivatives are produced. Can use caffeoyl-CoA, 5-hydroxyferulic acid, luteolin, tricetin, quercetin, myrcetin and 7,8-dihydroxyflavone as substrates, but not naringenin, apigenin or kaempferol. The 2,3-double bond and the O-dihydroxyl group of the substrate are both required for catalytic activity of the enzyme. The sequence is that of Tricin synthase 1 (ROMT-15) from Oryza sativa subsp. japonica (Rice).